The primary structure comprises 215 residues: Ependymin-2 (215 aa).

The N-terminal stretch at M1–A20 is a signal peptide. N-linked (GlcNAc...) asparagine glycans are attached at residues N71 and N94.

It belongs to the ependymin family. Forms disulfide-linked dimers. In terms of processing, different glycosylation variants are known as EPD-beta and EPD-gamma. Post-translationally, binds calcium through the terminal sialic acids. In terms of tissue distribution, EPDs are synthesized in the meninx and secreted in the cerebrospinal fluid.

The protein resides in the secreted. Functionally, may play a role in neural plasticity. May be involved during axon regeneration. The polypeptide is Ependymin-2 (epd2) (Carassius auratus (Goldfish)).